Here is a 37-residue protein sequence, read N- to C-terminus: Large ribosomal subunit protein bL36A (37 aa).

This sequence belongs to the bacterial ribosomal protein bL36 family.

The protein is Large ribosomal subunit protein bL36A of Haemophilus ducreyi (strain 35000HP / ATCC 700724).